Reading from the N-terminus, the 395-residue chain is Cystathionine beta-lyase (395 aa).

K210 bears the N6-(pyridoxal phosphate)lysine mark.

The protein belongs to the trans-sulfuration enzymes family. In terms of assembly, homotetramer. It depends on pyridoxal 5'-phosphate as a cofactor.

The protein localises to the cytoplasm. The enzyme catalyses L,L-cystathionine + H2O = L-homocysteine + pyruvate + NH4(+). It catalyses the reaction an S-substituted L-cysteine + H2O = a thiol + pyruvate + NH4(+). It participates in amino-acid biosynthesis; L-methionine biosynthesis via de novo pathway; L-homocysteine from L-cystathionine: step 1/1. Catalyzes the cleavage of cystathionine to homocysteine, pyruvate and ammonia during methionine biosynthesis. The polypeptide is Cystathionine beta-lyase (metC) (Salmonella typhimurium (strain LT2 / SGSC1412 / ATCC 700720)).